We begin with the raw amino-acid sequence, 363 residues long: Putative type I specificity subunit S.MpnORF507P (363 aa).

It belongs to the type-I restriction system S methylase family. In terms of assembly, the methyltransferase is composed of M and S polypeptides.

The specificity (S) subunit of a type I methyltransferase (MTase); this subunit dictates DNA sequence specificity. The single R subunit has multiple frameshifts and is probably not expressed. In Mycoplasma pneumoniae (strain ATCC 29342 / M129 / Subtype 1) (Mycoplasmoides pneumoniae), this protein is Putative type I specificity subunit S.MpnORF507P.